Consider the following 1501-residue polypeptide: Pleiotropic ABC efflux transporter of multiple drugs CDR1 (1501 aa).

The segment at 1–30 (MSDSKMSSQDESKLEKAISQDSSSENHSIN) is disordered. Topologically, residues 1–513 (MSDSKMSSQD…NFLRMKGDPS (513 aa)) are cytoplasmic. An NBD1 region spans residues 2-512 (SDSKMSSQDE…RNFLRMKGDP (511 aa)). Basic and acidic residues predominate over residues 8–18 (SQDESKLEKAI). An ABC transporter 1 domain is found at 150 to 404 (LATEGFRHFQ…FEKMGWKCPQ (255 aa)). Residues 514–534 (IPIFSVFGQLVMGLILSSVFY) form a helical membrane-spanning segment. At 535–548 (NLSQTTGSFYYRGA) the chain is on the extracellular side. A helical transmembrane segment spans residues 549 to 569 (AMFFAVLFNAFSSLLEIMSLF). Topologically, residues 570-597 (EARPIVEKHKKYALYRPSADALASIISE) are cytoplasmic. The chain crosses the membrane as a helical span at residues 598–618 (LPVKLAMSMSFNFVFYFMVNF). Residues 619 to 622 (RRNP) lie on the Extracellular side of the membrane. A helical transmembrane segment spans residues 623–643 (GRFFFYWLMCIWCTFVMSHLF). The Cytoplasmic portion of the chain corresponds to 644 to 654 (RSIGAVSTSIS). The helical transmembrane segment at 655–675 (GAMTPATVLLLAMVIYTGFVI) threads the bilayer. Residues 676-764 (PTPSMLGWSR…QYYNSHKWRN (89 aa)) lie on the Extracellular side of the membrane. Residues 765-785 (LGITIGFAVFFLAIYIALTEF) traverse the membrane as a helical segment. The Cytoplasmic segment spans residues 786-1195 (NKGAMQKGEI…TIVQDWRSPG (410 aa)). The interval 786 to 1195 (NKGAMQKGEI…TIVQDWRSPG (410 aa)) is NBD2. One can recognise an ABC transporter 2 domain in the interval 859–1103 (FFWRDLTYQV…MINYFEKYGA (245 aa)). 895-902 (GASGAGKT) contributes to the ATP binding site. Residues 1137–1164 (RNSSEYQAVREEINRMEAELSKLPRDND) are a coiled coil. Residues 1196–1216 (YIYSKIFLVVSAALFNGFSFF) form a helical membrane-spanning segment. Over 1217 to 1229 (KAKNNMQGLQNQM) the chain is Extracellular. The chain crosses the membrane as a helical span at residues 1230–1250 (FSVFMFFIPFNTLVQQMLPYF). Residues 1251-1280 (VKQRDVYEVREAPSRTFSWFAFIAGQITSE) lie on the Cytoplasmic side of the membrane. A helical transmembrane segment spans residues 1281–1301 (IPYQVAVGTIAFFCWYYPLGL). The Extracellular segment spans residues 1302-1314 (YNNATPTDSVNPR). Residues 1315–1335 (GVLMWMLVTAFYVYTATMGQL) form a helical membrane-spanning segment. Over 1336–1355 (CMSFSELADNAANLATLLFT) the chain is Cytoplasmic. A helical membrane pass occupies residues 1356–1376 (MCLNFCGVLAGPDVLPGFWIF). Residues 1377–1466 (MYRCNPFTYL…NSLYSERWRN (90 aa)) are Extracellular-facing. A helical membrane pass occupies residues 1467–1487 (FGIFIAFIAINIILTVIFYWL). Residues 1488-1501 (ARVPKGNREKKNKK) are Cytoplasmic-facing.

The protein belongs to the ABC transporter superfamily.

It localises to the cell membrane. With respect to regulation, disulfiram reverses CDR1-mediated drug resistance by interaction with both ATP and substrate-binding sites of the transporter and may be useful for antifungal therapy. Pleiotropic ABC efflux transporter that confers resistance to numerous chemicals including anisomycin, cycloheximide, fluconazole, miconazole, ketoconazole, itriconazole, nystatin, terbinafine, amorolfine, brefeldin A, amphotericin B, fluphenazine, as well as estrogen. Plays a role in farnesol-induced apoptotic process through glutathione efflux activity. Mediates in-to-out translocation of membrane phospholipids including aminophospholipids and thus regulates asymmetric distribution of phosphatidylethanolamine. Exhibits nucleoside triphosphatase activity. The chain is Pleiotropic ABC efflux transporter of multiple drugs CDR1 (CDR1) from Candida albicans (strain SC5314 / ATCC MYA-2876) (Yeast).